We begin with the raw amino-acid sequence, 306 residues long: Cathepsin Z (306 aa).

The signal sequence occupies residues 1–20; sequence MLAILFNFFLLTYFTNITLG. A propeptide spans 21 to 65 (activation peptide); the sequence is KVGKSIDLDTRNGYNVHGCYKQTGKIYAHKTYPRQYEAENYNFDD. Intrachain disulfides connect cysteine 39-cysteine 96, cysteine 93-cysteine 136, cysteine 130-cysteine 168, cysteine 158-cysteine 174, and cysteine 177-cysteine 182. Residue cysteine 96 is part of the active site. The N-linked (GlcNAc...) asparagine glycan is linked to asparagine 187. An intrachain disulfide couples cysteine 217 to cysteine 299. Catalysis depends on residues histidine 243 and asparagine 265. N-linked (GlcNAc...) asparagine glycosylation is present at asparagine 286.

Belongs to the peptidase C1 family.

The protein localises to the cytoplasmic vesicle. It is found in the secretory vesicle. It localises to the secreted. It catalyses the reaction Release of C-terminal amino acid residues with broad specificity, but lacks action on C-terminal proline. Shows weak endopeptidase activity.. With respect to regulation, the disulfide bridge formed between Cys-39 in the propeptide and the active site residue Cys-96 may prevent activation of the zymogen through formation of a reversible covalent bond with the active site residue. Exhibits carboxy-monopeptidase as well as carboxy-dipeptidase activity. Plays an essential role in molting, a process during larval stages in which a new cuticle is formed and the old cuticle is shed. Required for the degradation and shedding of the old cuticle. The chain is Cathepsin Z from Onchocerca volvulus.